Here is a 394-residue protein sequence, read N- to C-terminus: Chalcone synthase (394 aa).

Residue C168 is part of the active site.

Belongs to the thiolase-like superfamily. Chalcone/stilbene synthases family.

It carries out the reaction (E)-4-coumaroyl-CoA + 3 malonyl-CoA + 3 H(+) = 2',4,4',6'-tetrahydroxychalcone + 3 CO2 + 4 CoA. It functions in the pathway secondary metabolite biosynthesis; flavonoid biosynthesis. The primary product of this enzyme is 4,2',4',6'-tetrahydroxychalcone (also termed naringenin-chalcone or chalcone) which can under specific conditions spontaneously isomerize into naringenin. This is Chalcone synthase (CHS) from Raphanus sativus (Radish).